The chain runs to 984 residues: MVPQKRSRDDLNGLKSPVRSPKKIAMPAATSASNGVVAGWHSTIEKVVKSVVSIQFAQVASFDCESAVVSEATGFVVDTEMGIIMTNRHVVGAGPFCGYAVFDNHEECELVPIYRDPVHDFGFLKFDPSKIKYMNVQKLRLCPEKAQVGTEIRVVGNDNGEKLSILSGFISRLDRNAPDYGDLTYNDFNTEYIQAAASASGGSSGSPVVDIDGDAIALQAGGSTDASTDFFLPLNRGKRALECILRGDKVTRGTIQTHWMLKPFDECRRLGLSASNEKKQRELFPSTIGMLVAETVLPEGPSAVAATEGDILLSVNSTPISSFITLDSILDEAVGDIVKVTVERNGAEITFDIYVQDLHSITPDRYVEVCGASFQDLSYQLARIYAIPVRGVYVSEVGGSFRLDGQGNESKGWVVDSIDDIDTPDLDTFIKVIAAIPDGRRVSIRYRHLRDLHTTNFTITYIDRKWHSSFRLAVRNDTTGKWDFTDLSKQYPVPKKDEIVPQRATFTDPNLEEADAACAPLSRSFVRVSCMIPYKIDGFPRTMRQSHGLVVDAEKGLVLVSRSIIPYDLCNVSVTFAESVVVPGTVVFMHPLQNYAILQYDPKLVHADIETAKLSSTPLKQGDPVLFMGHNLSLRLVTTRTKVSDVTAITIPPNAGEPYYRALNLDAITVDSTIPNGCTAGVLADPKTGVVRAFWLSCMGERTEGRQHEYRLGIDTSTFLETVQRIRAGKPPQERFLDVEIASVSMIQARIRGVSPEWIAAVEQDNSQRHQLFEVIRTATPINGNSQALKEGDILLSINGKLLTTLTTLSEAGDKEQVTIKLVRNKKEEEIQAPTTDSAFETSQAVFWCGAVLQTPHHAVRQQIKKIHSGVYVSSRAQGSPAYQYLIAPTNFITHVNGTATPDLETFLSVVTKIPDNTYVKLRIVTFDNVAFACSMKMNYHYFPTAEIKKEGNEWVGYSYKDGKRVKESDENVEEQVNEAEKQE.

Positions 51 to 241 (VVSIQFAQVA…LPLNRGKRAL (191 aa)) are serine protease. Catalysis depends on charge relay system residues histidine 89, aspartate 120, and serine 203. PDZ domains follow at residues 268–346 (RRLG…ERNG) and 756–826 (PEWI…VRNK).

Belongs to the peptidase S1C family.

The protein localises to the nucleus. Functionally, nuclear serine protease which mediates apoptosis. The chain is Pro-apoptotic serine protease NMA111 (NMA111) from Yarrowia lipolytica (strain CLIB 122 / E 150) (Yeast).